The following is a 100-amino-acid chain: Replication restart protein PriB (100 aa).

Residues 1–100 form the SSB domain; it reads MTNRIELSGV…VLHADKISQI (100 aa).

It belongs to the PriB family. As to quaternary structure, homodimer. Interacts with PriA and DnaT. Component of the replication restart primosome. Primosome assembly occurs via a 'hand-off' mechanism. PriA binds to replication forks, subsequently PriB then DnaT bind; DnaT then displaces ssDNA to generate the helicase loading substrate.

Involved in the restart of stalled replication forks, which reloads the replicative helicase on sites other than the origin of replication; the PriA-PriB pathway is the major replication restart pathway. During primosome assembly it facilitates complex formation between PriA and DnaT on DNA; stabilizes PriA on DNA. Stimulates the DNA unwinding activity of PriA helicase. This Vibrio cholerae serotype O1 (strain ATCC 39315 / El Tor Inaba N16961) protein is Replication restart protein PriB.